A 103-amino-acid polypeptide reads, in one-letter code: OMEGA-ectatommitoxin(02)-Rm1d (103 aa).

Residues 1-30 (MKDSYISIVIAYLMVTFILVSSMPIEGEKR) form the signal peptide. Cystine bridges form between Cys-39–Cys-54, Cys-49–Cys-70, and Cys-72–Cys-81. The EGF-like domain maps to 43–82 (LNDENYCFNGKCVHLVAQDEPGKPYYSCICDEFYIGERCG).

The protein belongs to the EGF domain peptide family. In terms of tissue distribution, expressed by the venom gland.

It is found in the secreted. Ant peptide with probable defensive activity which acts as a potent agonist of the mammalian epidermal growth factor receptor (EGFR). Mimics, both structurally and functionally, vertebrate epidermal growth factor (EGF) peptide hormones. In vivo, intraplantar injection in mice causes long-lasting (several days) hypersensitivity of the injected paw to both mechanical and thermal stimuli. Its long-lasting effect is unusual for venom toxins whose effects are usually immediate. One possible explanation is that it would reduce the duration of a nest attack, discourage future attacks, or enhance the actions of subsequent exposure to other pain-inducing venom peptides. The chain is OMEGA-ectatommitoxin(02)-Rm1d from Rhytidoponera metallica (Australian green-headed ant).